A 359-amino-acid chain; its full sequence is Alanine racemase (359 aa).

Lysine 34 functions as the Proton acceptor; specific for D-alanine in the catalytic mechanism. N6-(pyridoxal phosphate)lysine is present on lysine 34. Arginine 129 is a binding site for substrate. The active-site Proton acceptor; specific for L-alanine is the tyrosine 254. Substrate is bound at residue methionine 302.

The protein belongs to the alanine racemase family. The cofactor is pyridoxal 5'-phosphate.

It catalyses the reaction L-alanine = D-alanine. It functions in the pathway amino-acid biosynthesis; D-alanine biosynthesis; D-alanine from L-alanine: step 1/1. Catalyzes the interconversion of L-alanine and D-alanine. May also act on other amino acids. This is Alanine racemase (alr) from Yersinia pestis.